The primary structure comprises 728 residues: Microtubule-associated protein VP5 (728 aa).

It belongs to the reoviridae microtubule-associated protein family.

It is found in the virion. The protein resides in the host cytoplasm. The protein localises to the host cytoskeleton. Minor inner capsid component. Displays NTPase and RNA 5'-triphosphatase (RTPase) activities. May function as a cofactor of polymerase. Associates with microtubules and plays a role in the formation, structural organization and morphology of viral inclusions, where the assembly of cores and the replication of viral RNA occur. This Ctenopharyngodon idella (Grass carp) protein is Microtubule-associated protein VP5 (S5).